The following is a 438-amino-acid chain: Trigger factor (438 aa).

In terms of domain architecture, PPIase FKBP-type spans 163 to 248 (GDKLNIDFEG…VKRIETTEAR (86 aa)).

Belongs to the FKBP-type PPIase family. Tig subfamily.

Its subcellular location is the cytoplasm. It carries out the reaction [protein]-peptidylproline (omega=180) = [protein]-peptidylproline (omega=0). Functionally, involved in protein export. Acts as a chaperone by maintaining the newly synthesized protein in an open conformation. Functions as a peptidyl-prolyl cis-trans isomerase. This Syntrophomonas wolfei subsp. wolfei (strain DSM 2245B / Goettingen) protein is Trigger factor.